We begin with the raw amino-acid sequence, 534 residues long: Arginine--tRNA ligase (534 aa).

The 'HIGH' region signature appears at 120-130 (ANPTGFLHLGH).

The protein belongs to the class-I aminoacyl-tRNA synthetase family. As to quaternary structure, monomer.

The protein resides in the cytoplasm. It catalyses the reaction tRNA(Arg) + L-arginine + ATP = L-arginyl-tRNA(Arg) + AMP + diphosphate. The protein is Arginine--tRNA ligase of Mesomycoplasma hyopneumoniae (strain 7448) (Mycoplasma hyopneumoniae).